The primary structure comprises 125 residues: MAAAGLAQIPDVDIDSDGVFKYVLIRVHAAPPSEAPGGESKDIVRGYKWAEYHADIYDKVSGELQKKGHDCECLGGGRISHQSQDRKIHVYGYSMGYGRAQHSVSTEKIRAKYPDYEVTWADDGY.

Alanine 2 carries the N-acetylalanine modification. Lysine 21 provides a ligand contact to substrate. Histidine 53 functions as the Proton acceptor in the catalytic mechanism. 94–96 (SMG) is a binding site for substrate.

As to quaternary structure, monomer.

It is found in the cytoplasm. The enzyme catalyses N(pros)-phospho-L-histidyl-[protein] + H2O = L-histidyl-[protein] + phosphate. The catalysed reaction is N(tele)-phospho-L-histidyl-[protein] + H2O = L-histidyl-[protein] + phosphate. Its function is as follows. Exhibits phosphohistidine phosphatase activity. May have a significant involvement in neuronal signaling. The chain is 14 kDa phosphohistidine phosphatase (PHPT1) from Oryctolagus cuniculus (Rabbit).